Consider the following 746-residue polypeptide: NAD(P)H-quinone oxidoreductase subunit 5, chloroplastic (746 aa).

16 helical membrane-spanning segments follow: residues 9-29 (WIIPFIPLPVPILLGVGLLLF), 40-60 (WTFLSIFLLSIVMIFSLYLSI), 89-109 (IDPLTSIMSILISTVGILVLI), 125-145 (FAYMGFFNTSMLGLVTSSNLI), 147-167 (VYFFWELVGMCSYLLIGFWFT), 185-205 (GDFGLLLGILGLYWITGSFEF), 221-241 (VNLLFLTLCAFLLFVGPIAKS), 258-278 (TPISALIHAATMVAAGIFLVA), 280-300 (LLPLFIVIPSIMYIISLIGII), 327-347 (LGYMMLALGMGSYRSALFHLI), 354-374 (ALLFLGSGSIIHSMEAIVGYS), 396-416 (TAFLIGTLSLCGIPPLACFWS), 425-445 (LLFSPIFAIIACSTAGLTAFY), 547-567 (ILFPMLVLLLFTLFIGAIGIP), 608-628 (FSVSIAFFGIFIAYCLYKPFY), and 723-743 (YLFLYLSYVLIFLIILFFFYF).

This sequence belongs to the complex I subunit 5 family. In terms of assembly, NDH is composed of at least 16 different subunits, 5 of which are encoded in the nucleus.

It is found in the plastid. The protein localises to the chloroplast thylakoid membrane. The catalysed reaction is a plastoquinone + NADH + (n+1) H(+)(in) = a plastoquinol + NAD(+) + n H(+)(out). It carries out the reaction a plastoquinone + NADPH + (n+1) H(+)(in) = a plastoquinol + NADP(+) + n H(+)(out). In terms of biological role, NDH shuttles electrons from NAD(P)H:plastoquinone, via FMN and iron-sulfur (Fe-S) centers, to quinones in the photosynthetic chain and possibly in a chloroplast respiratory chain. The immediate electron acceptor for the enzyme in this species is believed to be plastoquinone. Couples the redox reaction to proton translocation, and thus conserves the redox energy in a proton gradient. The protein is NAD(P)H-quinone oxidoreductase subunit 5, chloroplastic (ndhF) of Lepidium virginicum (Virginia pepperweed).